The primary structure comprises 72 residues: Translation initiation factor IF-1 (72 aa).

Residues 1–72 form the S1-like domain; sequence MSNDDSIEFE…TKGRITYRMK (72 aa).

Belongs to the IF-1 family. Component of the 30S ribosomal translation pre-initiation complex which assembles on the 30S ribosome in the order IF-2 and IF-3, IF-1 and N-formylmethionyl-tRNA(fMet); mRNA recruitment can occur at any time during PIC assembly.

Its subcellular location is the cytoplasm. Functionally, one of the essential components for the initiation of protein synthesis. Stabilizes the binding of IF-2 and IF-3 on the 30S subunit to which N-formylmethionyl-tRNA(fMet) subsequently binds. Helps modulate mRNA selection, yielding the 30S pre-initiation complex (PIC). Upon addition of the 50S ribosomal subunit IF-1, IF-2 and IF-3 are released leaving the mature 70S translation initiation complex. The protein is Translation initiation factor IF-1 of Xanthomonas campestris pv. campestris (strain B100).